The primary structure comprises 269 residues: 4-hydroxy-tetrahydrodipicolinate reductase (269 aa).

Residues 8–13 (GAAGRM) and Glu-34 each bind NAD(+). Residue Arg-35 coordinates NADP(+). Residues 98 to 100 (GTT) and 122 to 125 (APNY) each bind NAD(+). The active-site Proton donor/acceptor is the His-155. His-156 lines the (S)-2,3,4,5-tetrahydrodipicolinate pocket. Lys-159 acts as the Proton donor in catalysis. 165–166 (GT) provides a ligand contact to (S)-2,3,4,5-tetrahydrodipicolinate.

The protein belongs to the DapB family.

The protein localises to the cytoplasm. The enzyme catalyses (S)-2,3,4,5-tetrahydrodipicolinate + NAD(+) + H2O = (2S,4S)-4-hydroxy-2,3,4,5-tetrahydrodipicolinate + NADH + H(+). The catalysed reaction is (S)-2,3,4,5-tetrahydrodipicolinate + NADP(+) + H2O = (2S,4S)-4-hydroxy-2,3,4,5-tetrahydrodipicolinate + NADPH + H(+). It participates in amino-acid biosynthesis; L-lysine biosynthesis via DAP pathway; (S)-tetrahydrodipicolinate from L-aspartate: step 4/4. Its function is as follows. Catalyzes the conversion of 4-hydroxy-tetrahydrodipicolinate (HTPA) to tetrahydrodipicolinate. The polypeptide is 4-hydroxy-tetrahydrodipicolinate reductase (Vibrio vulnificus (strain YJ016)).